Here is a 258-residue protein sequence, read N- to C-terminus: NAD kinase (258 aa).

The active-site Proton acceptor is D45. NAD(+) contacts are provided by residues 45-46 (DG), 117-118 (NE), D147, A155, 158-163 (TAYNYS), and A182.

The protein belongs to the NAD kinase family. A divalent metal cation serves as cofactor.

Its subcellular location is the cytoplasm. It carries out the reaction NAD(+) + ATP = ADP + NADP(+) + H(+). In terms of biological role, involved in the regulation of the intracellular balance of NAD and NADP, and is a key enzyme in the biosynthesis of NADP. Catalyzes specifically the phosphorylation on 2'-hydroxyl of the adenosine moiety of NAD to yield NADP. This Xanthomonas oryzae pv. oryzae (strain MAFF 311018) protein is NAD kinase.